The sequence spans 173 residues: Cytochrome c-type biogenesis protein CcmE (173 aa).

At 1–8 (MNPRRKSR) the chain is on the cytoplasmic side. The helical; Signal-anchor for type II membrane protein transmembrane segment at 9 to 29 (FKLVIFVVLGIAIASGLMLYA) threads the bilayer. The Periplasmic segment spans residues 30 to 173 (LRQNIDLFYT…RDRQEKEGAK (144 aa)). The heme site is built by His131 and Tyr135. Residues 152–173 (GIKAADLKGESARDRQEKEGAK) are disordered. Positions 156-173 (ADLKGESARDRQEKEGAK) are enriched in basic and acidic residues.

The protein belongs to the CcmE/CycJ family.

The protein resides in the cell inner membrane. Heme chaperone required for the biogenesis of c-type cytochromes. Transiently binds heme delivered by CcmC and transfers the heme to apo-cytochromes in a process facilitated by CcmF and CcmH. The protein is Cytochrome c-type biogenesis protein CcmE of Haemophilus influenzae (strain PittEE).